Reading from the N-terminus, the 313-residue chain is 4-hydroxy-3-methylbut-2-enyl diphosphate reductase (313 aa).

A [4Fe-4S] cluster-binding site is contributed by Cys-12. Residues His-41 and His-74 each coordinate (2E)-4-hydroxy-3-methylbut-2-enyl diphosphate. The dimethylallyl diphosphate site is built by His-41 and His-74. Positions 41 and 74 each coordinate isopentenyl diphosphate. Residue Cys-96 participates in [4Fe-4S] cluster binding. His-124 lines the (2E)-4-hydroxy-3-methylbut-2-enyl diphosphate pocket. Residue His-124 participates in dimethylallyl diphosphate binding. His-124 is a binding site for isopentenyl diphosphate. The active-site Proton donor is Glu-126. (2E)-4-hydroxy-3-methylbut-2-enyl diphosphate is bound at residue Thr-167. Residue Cys-197 coordinates [4Fe-4S] cluster. (2E)-4-hydroxy-3-methylbut-2-enyl diphosphate contacts are provided by Ser-225, Ser-226, Asn-227, and Ser-269. The dimethylallyl diphosphate site is built by Ser-225, Ser-226, Asn-227, and Ser-269. Isopentenyl diphosphate contacts are provided by Ser-225, Ser-226, Asn-227, and Ser-269.

It belongs to the IspH family. It depends on [4Fe-4S] cluster as a cofactor.

The catalysed reaction is isopentenyl diphosphate + 2 oxidized [2Fe-2S]-[ferredoxin] + H2O = (2E)-4-hydroxy-3-methylbut-2-enyl diphosphate + 2 reduced [2Fe-2S]-[ferredoxin] + 2 H(+). It catalyses the reaction dimethylallyl diphosphate + 2 oxidized [2Fe-2S]-[ferredoxin] + H2O = (2E)-4-hydroxy-3-methylbut-2-enyl diphosphate + 2 reduced [2Fe-2S]-[ferredoxin] + 2 H(+). Its pathway is isoprenoid biosynthesis; dimethylallyl diphosphate biosynthesis; dimethylallyl diphosphate from (2E)-4-hydroxy-3-methylbutenyl diphosphate: step 1/1. It functions in the pathway isoprenoid biosynthesis; isopentenyl diphosphate biosynthesis via DXP pathway; isopentenyl diphosphate from 1-deoxy-D-xylulose 5-phosphate: step 6/6. Its function is as follows. Catalyzes the conversion of 1-hydroxy-2-methyl-2-(E)-butenyl 4-diphosphate (HMBPP) into a mixture of isopentenyl diphosphate (IPP) and dimethylallyl diphosphate (DMAPP). Acts in the terminal step of the DOXP/MEP pathway for isoprenoid precursor biosynthesis. In Photobacterium profundum (strain SS9), this protein is 4-hydroxy-3-methylbut-2-enyl diphosphate reductase.